Reading from the N-terminus, the 585-residue chain is Protein FAM151A (585 aa).

The helical transmembrane segment at 14 to 34 (WVFASITCVSAVAIAAIVLAI) threads the bilayer.

This sequence belongs to the menorin family.

The protein resides in the membrane. In Pongo abelii (Sumatran orangutan), this protein is Protein FAM151A (FAM151A).